The sequence spans 1001 residues: Serine/threonine-protein kinase TAO1 (1001 aa).

Ser-9 bears the Phosphoserine mark. A Protein kinase domain is found at 28–281 (FTDLREIGHG…SEELLKHMFV (254 aa)). Residues 34–42 (IGHGSFGAV) and Lys-57 contribute to the ATP site. The active-site Proton acceptor is Asp-151. 2 disordered regions span residues 324 to 380 (PAVE…DKSE) and 404 to 431 (ENYQ…HKSH). The segment covering 350-370 (SNQSIPSMSISASSQSSSVNS) has biased composition (low complexity). Phosphoserine is present on residues Ser-421 and Ser-445. Residues 458–651 (SELREQMSGY…QTQKDLEHAM (194 aa)) adopt a coiled-coil conformation. The disordered stretch occupies residues 567 to 587 (KEELNENQSTPKKEKQEWLSK). The segment covering 577–587 (PKKEKQEWLSK) has biased composition (basic and acidic residues). Thr-669 carries the post-translational modification Phosphothreonine. Residues 754–877 (KAVLKRLKEE…LERQAREIEA (124 aa)) are a coiled coil. The interval 905 to 1001 (PGASSWSHNP…ISNGSHMSYT (97 aa)) is disordered. The segment covering 906–915 (GASSWSHNPT) has biased composition (polar residues). Ser-965 bears the Phosphoserine mark. Residues 975 to 1001 (GGRTEQGMSRSTSVTSQISNGSHMSYT) show a composition bias toward polar residues.

Belongs to the protein kinase superfamily. STE Ser/Thr protein kinase family. STE20 subfamily. Self-associates. Interacts with MAP2K3. Interacts with SPRED1. Interacts with TESK1; the interaction inhibits TAOK1 kinase activity. Interacts with MAP3K7. In terms of processing, proteolytically processed by caspase-3 (CASP3). Autophosphorylated. Phosphorylated by ATM in response to DNA damage. Phosphorylated by LRRK2.

Its subcellular location is the cytoplasm. It carries out the reaction L-seryl-[protein] + ATP = O-phospho-L-seryl-[protein] + ADP + H(+). It catalyses the reaction L-threonyl-[protein] + ATP = O-phospho-L-threonyl-[protein] + ADP + H(+). Serine/threonine-protein kinase activity is inhibited by SPRED1. Functionally, serine/threonine-protein kinase involved in various processes such as p38/MAPK14 stress-activated MAPK cascade, DNA damage response and regulation of cytoskeleton stability. Phosphorylates MAP2K3, MAP2K6 and MARK2. Acts as an activator of the p38/MAPK14 stress-activated MAPK cascade by mediating phosphorylation and subsequent activation of the upstream MAP2K3 and MAP2K6 kinases. Involved in G-protein coupled receptor signaling to p38/MAPK14. In response to DNA damage, involved in the G2/M transition DNA damage checkpoint by activating the p38/MAPK14 stress-activated MAPK cascade, probably by mediating phosphorylation of MAP2K3 and MAP2K6. Acts as a regulator of cytoskeleton stability by phosphorylating 'Thr-208' of MARK2, leading to activate MARK2 kinase activity and subsequent phosphorylation and detachment of MAPT/TAU from microtubules. Also acts as a regulator of apoptosis: regulates apoptotic morphological changes, including cell contraction, membrane blebbing and apoptotic bodies formation via activation of the MAPK8/JNK cascade. During fetal development, it plays an essential role in the regulation of neuronal differentiation and migration to the cortical plate. In Rattus norvegicus (Rat), this protein is Serine/threonine-protein kinase TAO1 (Taok1).